A 100-amino-acid polypeptide reads, in one-letter code: Urease subunit gamma (100 aa).

This sequence belongs to the urease gamma subunit family. Heterotrimer of UreA (gamma), UreB (beta) and UreC (alpha) subunits. Three heterotrimers associate to form the active enzyme.

It is found in the cytoplasm. It carries out the reaction urea + 2 H2O + H(+) = hydrogencarbonate + 2 NH4(+). It functions in the pathway nitrogen metabolism; urea degradation; CO(2) and NH(3) from urea (urease route): step 1/1. The chain is Urease subunit gamma from Rhizobium rhizogenes (strain K84 / ATCC BAA-868) (Agrobacterium radiobacter).